The following is a 184-amino-acid chain: Putative rRNA methyltransferase YlbH (184 aa).

Positions 1–22 (MRVISGSKKGRSLKAVAGTSTR) are disordered.

This sequence belongs to the methyltransferase superfamily. RsmD family.

Its function is as follows. May catalyze the S-adenosyl-L-methionine-dependent methylation of a specific base in rRNA. This chain is Putative rRNA methyltransferase YlbH (ylbH), found in Bacillus subtilis (strain 168).